A 616-amino-acid polypeptide reads, in one-letter code: uncharacterized protein (616 aa).

It belongs to the UbiD family.

This is an uncharacterized protein from Helicobacter pylori (strain J99 / ATCC 700824) (Campylobacter pylori J99).